We begin with the raw amino-acid sequence, 1440 residues long: Genome polyprotein (1440 aa).

Positions 32 to 53 (GGNEGSIMWLASLAVVIACAGA) are cleaved as a propeptide — ER anchor for the capsid protein C, removed in mature form by serine protease NS3. Residues 36-56 (GSIMWLASLAVVIACAGAMKL) form a helical membrane-spanning segment. The Extracellular segment spans residues 57 to 180 (SNFQGKLLMT…ATRYLMKTEN (124 aa)). A glycan (N-linked (GlcNAc...) asparagine; by host) is linked at N68. Residues 181 to 201 (WIVRNPGYAFLAAILGWMLGS) traverse the membrane as a helical segment. Residues 202 to 207 (NNGQRR) are Cytoplasmic-facing. Residues 208–222 (WYFTILLLLVAPAYS) form a helical membrane-spanning segment. Topologically, residues 223-674 (FNCLGMGNRD…QVFGGAFRTL (452 aa)) are extracellular. Disulfide bonds link C225–C252, C282–C338, C282–C343, C296–C327, C314–C338, and C314–C343. Residues 320-333 (DRGWGNGCGLFGKG) form a fusion peptide region. Residue N376 is glycosylated (N-linked (GlcNAc...) asparagine; by host). 2 disulfide bridges follow: C412-C509 and C526-C557. Residues 675–695 (FGGMSWITQGLMGALLLWMGV) traverse the membrane as a helical segment. Over 696–701 (NARDRS) the chain is Cytoplasmic. A helical transmembrane segment spans residues 702–722 (IALAFLATGGVLVFLATNVHA). The Extracellular portion of the chain corresponds to 723–1147 (DTGCAIDITR…AFAEANSGGD (425 aa)). 6 disulfide bridges follow: C726–C737, C777–C865, C901–C945, C1002–C1051, C1013–C1034, and C1035–C1038. N-linked (GlcNAc...) asparagine; by host glycosylation is found at N852 and N929. Residues 1148-1168 (VLHLALIAVFKIQPAFLVMNM) traverse the membrane as a helical segment. Over 1169-1178 (LSTRWTNQEN) the chain is Cytoplasmic. The chain crosses the membrane as a helical span at residues 1179–1199 (VVLVLGAAFFHLASVDLQIGV). A topological domain (lumenal) is located at residue H1200. A helical transmembrane segment spans residues 1201–1221 (GILNAAAIAWMIVRAITFPTT). Residues 1222 to 1237 (SSVTMPVLALLTPGMR) are Cytoplasmic-facing. Residues 1238-1258 (ALYLDTYRIILLVIGICSLLQ) traverse the membrane as a helical segment. Residues 1259-1269 (ERKKTMAKKKG) lie on the Lumenal side of the membrane. Residues 1270–1290 (AVLLGLALTSTGWFSPTTIAA) form a helical membrane-spanning segment. Topologically, residues 1291–1302 (GLMVCNPNKKRG) are cytoplasmic. Residues 1303 to 1323 (WPATEFLSAVGLMFAIVGGLA) traverse the membrane as a helical segment. Residues 1324–1326 (ELD) lie on the Lumenal side of the membrane. A helical membrane pass occupies residues 1327-1347 (IESMSIPFMLAGLMAVSYVVS). Residues 1348–1404 (GKATDMWLERAADISWEMDAAITGSSRRLDVKLDDDGDFHLIDDPGVPWKVWVLRMS) are Cytoplasmic-facing. An interacts with and activates NS3 protease region spans residues 1355–1394 (LERAADISWEMDAAITGSSRRLDVKLDDDGDFHLIDDPGV). The helical intramembrane region spans 1405–1425 (CIGLAALTPWAIVPAAFGYWL). The Cytoplasmic portion of the chain corresponds to 1426-1440 (TLKTTKRGGVFWDTP).

As to quaternary structure, homodimer. Interacts (via N-terminus) with host EXOC1 (via C-terminus); this interaction results in EXOC1 degradation through the proteasome degradation pathway. In terms of assembly, forms heterodimers with envelope protein E in the endoplasmic reticulum and Golgi. Homodimer; in the endoplasmic reticulum and Golgi. Interacts with protein prM. Interacts with non-structural protein 1. As to quaternary structure, homodimer; Homohexamer when secreted. Interacts with envelope protein E. NS1 interacts with NS4B. Interacts with host complement protein CFH; this interaction leads to the degradation of C3. In terms of assembly, interacts (via N-terminus) with serine protease NS3. Forms a heterodimer with serine protease NS3. May form homooligomers. As to quaternary structure, forms a heterodimer with NS2B. Interacts with non-structural protein 2A (via N-terminus). Interacts with NS4B. Interacts with unphosphorylated RNA-directed RNA polymerase NS5; this interaction stimulates RNA-directed RNA polymerase NS5 guanylyltransferase activity. The cofactor is Mn(2+). Mg(2+) serves as cofactor. Post-translationally, specific enzymatic cleavages in vivo yield mature proteins. Cleavages in the lumen of endoplasmic reticulum are performed by host signal peptidase, whereas cleavages in the cytoplasmic side are performed by serine protease NS3. Signal cleavage at the 2K-4B site requires a prior NS3 protease-mediated cleavage at the 4A-2K site. In terms of processing, cleaved in post-Golgi vesicles by a host furin, releasing the mature small envelope protein M, and peptide pr. This cleavage is incomplete as up to 30% of viral particles still carry uncleaved prM. N-glycosylated. Post-translationally, N-glycosylated. The excreted form is glycosylated and this is required for efficient secretion of the protein from infected cells. In terms of processing, RNA-directed RNA polymerase NS5: Phosphorylated on serines residues. This phosphorylation may trigger NS5 nuclear localization.

It is found in the virion. The protein resides in the host nucleus. Its subcellular location is the host cytoplasm. The protein localises to the host perinuclear region. It localises to the secreted. It is found in the virion membrane. The protein resides in the host endoplasmic reticulum membrane. It catalyses the reaction Selective hydrolysis of -Xaa-Xaa-|-Yaa- bonds in which each of the Xaa can be either Arg or Lys and Yaa can be either Ser or Ala.. The catalysed reaction is a ribonucleoside 5'-triphosphate + H2O = a ribonucleoside 5'-diphosphate + phosphate + H(+). It carries out the reaction ATP + H2O = ADP + phosphate + H(+). Functionally, plays a role in virus budding by binding to the cell membrane and gathering the viral RNA into a nucleocapsid that forms the core of a mature virus particle. During virus entry, may induce genome penetration into the host cytoplasm after hemifusion induced by the surface proteins. Can migrate to the cell nucleus where it modulates host functions. Overcomes the anti-viral effects of host EXOC1 by sequestering and degrading the latter through the proteasome degradation pathway. Inhibits RNA silencing by interfering with host Dicer. In terms of biological role, prevents premature fusion activity of envelope proteins in trans-Golgi by binding to envelope protein E at pH 6.0. After virion release in extracellular space, gets dissociated from E dimers. Its function is as follows. Acts as a chaperone for envelope protein E during intracellular virion assembly by masking and inactivating envelope protein E fusion peptide. prM is the only viral peptide matured by host furin in the trans-Golgi network probably to avoid catastrophic activation of the viral fusion activity in acidic Golgi compartment prior to virion release. prM-E cleavage is inefficient, and many virions are only partially matured. These uncleaved prM would play a role in immune evasion. Functionally, may play a role in virus budding. Exerts cytotoxic effects by activating a mitochondrial apoptotic pathway through M ectodomain. May display a viroporin activity. Binds to host cell surface receptor and mediates fusion between viral and cellular membranes. Envelope protein is synthesized in the endoplasmic reticulum in the form of heterodimer with protein prM. They play a role in virion budding in the ER, and the newly formed immature particle is covered with 60 spikes composed of heterodimer between precursor prM and envelope protein E. The virion is transported to the Golgi apparatus where the low pH causes dissociation of PrM-E heterodimers and formation of E homodimers. prM-E cleavage is inefficient, and many virions are only partially matured. These uncleaved prM would play a role in immune evasion. In terms of biological role, involved in immune evasion, pathogenesis and viral replication. Once cleaved off the polyprotein, is targeted to three destinations: the viral replication cycle, the plasma membrane and the extracellular compartment. Essential for viral replication. Required for formation of the replication complex and recruitment of other non-structural proteins to the ER-derived membrane structures. Excreted as a hexameric lipoparticle that plays a role against host immune response. Antagonizing the complement function. Binds to the host macrophages and dendritic cells. Inhibits signal transduction originating from Toll-like receptor 3 (TLR3). Its function is as follows. Component of the viral RNA replication complex that functions in virion assembly and antagonizes the host alpha/beta interferon antiviral response. Functionally, required cofactor for the serine protease function of NS3. May have membrane-destabilizing activity and form viroporins. Displays three enzymatic activities: serine protease, NTPase and RNA helicase. NS3 serine protease, in association with NS2B, performs its autocleavage and cleaves the polyprotein at dibasic sites in the cytoplasm: C-prM, NS2A-NS2B, NS2B-NS3, NS3-NS4A, NS4A-2K and NS4B-NS5. NS3 RNA helicase binds RNA and unwinds dsRNA in the 3' to 5' direction. In terms of biological role, non-structural protein 4A: Regulates the ATPase activity of the NS3 helicase activity. NS4A allows NS3 helicase to conserve energy during unwinding. Its function is as follows. Peptide 2k: Functions as a signal peptide for NS4B and is required for the interferon antagonism activity of the latter. Functionally, non-structural protein 4B: Induces the formation of ER-derived membrane vesicles where the viral replication takes place. Inhibits interferon (IFN)-induced host STAT1 phosphorylation and nuclear translocation, thereby preventing the establishment of cellular antiviral state by blocking the IFN-alpha/beta pathway. Inhibits STAT2 translocation in the nucleus after IFN-alpha treatment. RNA-directed RNA polymerase NS5: Replicates the viral (+) and (-) RNA genome. Performs the capping of genomes in the cytoplasm. NS5 methylates viral RNA cap at guanine N-7 and ribose 2'-O positions. Besides its role in RNA genome replication, also prevents the establishment of cellular antiviral state by blocking the interferon-alpha/beta (IFN-alpha/beta) signaling pathway. Inhibits host TYK2 and STAT2 phosphorylation, thereby preventing activation of JAK-STAT signaling pathway. The sequence is that of Genome polyprotein from Japanese encephalitis virus (strain Nakayama) (JEV).